Reading from the N-terminus, the 135-residue chain is Early nodulin-5 (135 aa).

The signal sequence occupies residues 1 to 23; the sequence is MASSSSPIFLMIIFSMWLLFSYS.

As to expression, invasion zone and early symbiotic zone.

In terms of biological role, involved in the infection process during the plant-rhizobium interaction. The chain is Early nodulin-5 (ENOD5) from Pisum sativum (Garden pea).